Consider the following 378-residue polypeptide: 3-dehydroquinate synthase (378 aa).

Residues 115 to 119 (GVVGD), 139 to 140 (TS), Lys152, and Lys161 each bind NAD(+). The Zn(2+) site is built by Glu194, His256, and His275.

The protein belongs to the sugar phosphate cyclases superfamily. Dehydroquinate synthase family. Co(2+) is required as a cofactor. Zn(2+) serves as cofactor. It depends on NAD(+) as a cofactor.

The protein localises to the cytoplasm. It carries out the reaction 7-phospho-2-dehydro-3-deoxy-D-arabino-heptonate = 3-dehydroquinate + phosphate. It functions in the pathway metabolic intermediate biosynthesis; chorismate biosynthesis; chorismate from D-erythrose 4-phosphate and phosphoenolpyruvate: step 2/7. Its function is as follows. Catalyzes the conversion of 3-deoxy-D-arabino-heptulosonate 7-phosphate (DAHP) to dehydroquinate (DHQ). This is 3-dehydroquinate synthase from Brucella suis (strain ATCC 23445 / NCTC 10510).